Consider the following 622-residue polypeptide: Serine/threonine-protein kinase PknB (622 aa).

The Cytoplasmic segment spans residues 1-328 (MTTPPHLSDR…TESDGSIGRW (328 aa)). One can recognise a Protein kinase domain in the interval 11–273 (YELGDILGFG…TAAEMRADLI (263 aa)). Residues 17–25 (LGFGGMSEV), Lys40, and 93–95 (EYV) each bind ATP. The active-site Proton acceptor is Asp138. ATP is bound by residues 140-143 (KPAN) and Asp156. Residues Asn143 and Asp156 each contribute to the Mg(2+) site. Phosphoserine; by autocatalysis occurs at positions 166 and 168. 3 positions are modified to phosphothreonine; by autocatalysis: Thr170, Thr172, and Thr308. Residues 329 to 349 (VAVVAVLAVLTIAIVAAFNTF) traverse the membrane as a helical segment. Over 350–622 (GGNTRDVQVP…DGIITLKFGQ (273 aa)) the chain is Extracellular. PASTA domains follow at residues 352-418 (NTRD…NVST), 419-486 (GPEQ…IVGS), 487-553 (GPET…QVSK), and 554-622 (GNQF…KFGQ). The tract at residues 381-404 (RTLQKPDSTIPPDHVISTEPGANA) is disordered.

This sequence belongs to the protein kinase superfamily. Ser/Thr protein kinase family. As to quaternary structure, homodimer. Post-translationally, autophosphorylated. Dephosphorylated by PstP.

The protein resides in the cell membrane. The catalysed reaction is L-seryl-[protein] + ATP = O-phospho-L-seryl-[protein] + ADP + H(+). It carries out the reaction L-threonyl-[protein] + ATP = O-phospho-L-threonyl-[protein] + ADP + H(+). Functionally, protein kinase that regulates many aspects of mycobacterial physiology. Is a key component of a signal transduction pathway that regulates cell growth, cell shape and cell division via phosphorylation of target proteins. The polypeptide is Serine/threonine-protein kinase PknB (pknB) (Mycobacterium leprae (strain TN)).